A 175-amino-acid polypeptide reads, in one-letter code: Co-chaperone protein HscB homolog (175 aa).

In terms of domain architecture, J spans 7–79; that stretch reads SHFDLFHLPA…LKRATYLLSL (73 aa).

The protein belongs to the HscB family. In terms of assembly, interacts with HscA and stimulates its ATPase activity.

Its function is as follows. Co-chaperone involved in the maturation of iron-sulfur cluster-containing proteins. Seems to help targeting proteins to be folded toward HscA. This chain is Co-chaperone protein HscB homolog, found in Burkholderia multivorans (strain ATCC 17616 / 249).